A 311-amino-acid polypeptide reads, in one-letter code: Prohibitin-2 (311 aa).

The helical transmembrane segment at 39 to 57 (GAGMGLAGLVLLGGAAFVA) threads the bilayer. An AIM motif is present at residues 141 to 144 (YRTL).

The protein belongs to the prohibitin family. The mitochondrial prohibitin complex consists of two subunits (PHB1 and PHB2). The subunits assemble into a membrane-associated ring-shaped supercomplex of approximately 1 mDa. Interacts with ATG24/SNX4; the interaction is direct and plays a role in mitophagy.

Its subcellular location is the mitochondrion inner membrane. Functionally, prohibitin probably acts as a holdase/unfoldase for the stabilization of newly synthesized mitochondrial proteins. Involved in mitophagy. Required for the switch to necrotrophic growth. This Colletotrichum higginsianum (strain IMI 349063) (Crucifer anthracnose fungus) protein is Prohibitin-2.